Consider the following 357-residue polypeptide: Alanine racemase (357 aa).

K35 serves as the catalytic Proton acceptor; specific for D-alanine. K35 is subject to N6-(pyridoxal phosphate)lysine. R131 is a binding site for substrate. The active-site Proton acceptor; specific for L-alanine is Y256. M304 contributes to the substrate binding site.

Belongs to the alanine racemase family. Requires pyridoxal 5'-phosphate as cofactor.

It catalyses the reaction L-alanine = D-alanine. It functions in the pathway amino-acid biosynthesis; D-alanine biosynthesis; D-alanine from L-alanine: step 1/1. In terms of biological role, catalyzes the interconversion of L-alanine and D-alanine. May also act on other amino acids. The sequence is that of Alanine racemase (alr) from Legionella pneumophila (strain Corby).